The following is a 151-amino-acid chain: Putative esterase VNG_1336C (151 aa).

This sequence belongs to the thioesterase PaaI family.

This chain is Putative esterase VNG_1336C, found in Halobacterium salinarum (strain ATCC 700922 / JCM 11081 / NRC-1) (Halobacterium halobium).